A 645-amino-acid polypeptide reads, in one-letter code: Macrolide export ATP-binding/permease protein MacB (645 aa).

The region spanning 6–244 (IELEGIRRSY…SSIAVVPWQA (239 aa)) is the ABC transporter domain. 42-49 (GASGSGKS) serves as a coordination point for ATP. 4 consecutive transmembrane segments (helical) span residues 274-294 (ALTLSGIVIGVASVVAMMAIG), 526-546 (IAAISMLVGGIGIMNIMLITV), 574-594 (AVVLAAIGGVVGLLLGAVIGV), and 596-616 (AALLFGMTVIFSVTMALGALM).

Belongs to the ABC transporter superfamily. Macrolide exporter (TC 3.A.1.122) family. Homodimer.

The protein resides in the cell inner membrane. In terms of biological role, non-canonical ABC transporter that contains transmembrane domains (TMD), which form a pore in the inner membrane, and an ATP-binding domain (NBD), which is responsible for energy generation. Confers resistance against macrolides. The protein is Macrolide export ATP-binding/permease protein MacB of Nitrobacter winogradskyi (strain ATCC 25391 / DSM 10237 / CIP 104748 / NCIMB 11846 / Nb-255).